A 309-amino-acid chain; its full sequence is Protein FdhE (309 aa).

Belongs to the FdhE family.

The protein resides in the cytoplasm. Necessary for formate dehydrogenase activity. The protein is Protein FdhE of Escherichia coli O45:K1 (strain S88 / ExPEC).